The chain runs to 831 residues: Prolactin receptor (831 aa).

Positions 1 to 23 are cleaved as a signal peptide; that stretch reads MKQDLISSVQIILFLPLTTVGLA. Over 24–438 the chain is Extracellular; it reads GQSFPGKPKI…QIPNDFRVKD (415 aa). Fibronectin type-III domains lie at 30 to 128, 129 to 227, 230 to 331, and 332 to 433; these read KPKI…VQPG, SPVN…IPSG, PPEK…VQPD, and PPVN…IPND. A disulfide bridge connects residues C36 and C46. A glycan (N-linked (GlcNAc...) asparagine) is linked at N59. A disulfide bond links C75 and C86. N-linked (GlcNAc...) asparagine glycans are attached at residues N91, N100, N112, N132, N262, N303, N315, and N335. Zn(2+) is bound by residues D414 and H416. The short motif at 419 to 423 is the WSXWS motif element; that stretch reads WSEWS. A helical membrane pass occupies residues 439-459; the sequence is MIVWIVLGVLSSLICLIMSWT. Over 460–831 the chain is Cytoplasmic; the sequence is MVLKGYRMIT…DPSSFMPSFK (372 aa). Residues 471-479 carry the Box 1 motif motif; it reads MLPPVPGPK. Disordered stretches follow at residues 527–563, 774–796, and 808–831; these read QQLM…SPSL, RVPH…QQGQ, and PSDC…PSFK. Positions 787-796 are enriched in polar residues; it reads ETSQSLQQGQ.

Belongs to the type I cytokine receptor family. Type 1 subfamily.

It localises to the membrane. Functionally, this is a receptor for the anterior pituitary hormone prolactin. The polypeptide is Prolactin receptor (PRLR) (Gallus gallus (Chicken)).